The following is a 987-amino-acid chain: SNF2 domain-containing protein ENL1 (987 aa).

Disordered stretches follow at residues 1–172 and 224–245; these read MASP…AYGG and FGDY…ENHA. 2 stretches are compositionally biased toward pro residues: residues 18 to 27 and 51 to 71; these read TPPAPTPLAA and NPNP…PQEP. Basic and acidic residues predominate over residues 99 to 110; that stretch reads DSIRDILDDLTT. Residues 141 to 156 are compositionally biased toward polar residues; it reads PSQSQLNDGTKPSSSF. Over residues 226 to 237 the composition is skewed to acidic residues; the sequence is DYDDEDDIDQDA. In terms of domain architecture, Helicase ATP-binding spans 292–466; that stretch reads WVLHCRGTGG…WALFYFCCPE (175 aa). 305–312 serves as a coordination point for ATP; the sequence is DDMGLGKT. The short motif at 417 to 420 is the DEAH box element; the sequence is DEGH. The 157-residue stretch at 645 to 801 folds into the Helicase C-terminal domain; sequence SLLQNLVSEG…TRYFSKRDIQ (157 aa).

It belongs to the SNF2/RAD54 helicase family. In terms of tissue distribution, expressed in ovaries, roots, shoots and leaves.

Its subcellular location is the cytoplasm. The protein localises to the chromosome. Its function is as follows. DNA helicase that acts as an essential component of the spindle assembly checkpoint. Plays an indispensable role in the development of seed endosperm. Is required to secure sister chromosome separation during endosperm syncytial mitosis, which involves extremely rapid free nuclear cycles. The chain is SNF2 domain-containing protein ENL1 from Oryza sativa subsp. japonica (Rice).